The chain runs to 310 residues: ADP-L-glycero-D-manno-heptose-6-epimerase (310 aa).

NADP(+)-binding positions include phenylalanine 10–isoleucine 11, aspartate 31–asparagine 32, lysine 38, lysine 53, glutamate 75–serine 79, and asparagine 92. Tyrosine 140 serves as the catalytic Proton acceptor. Residue lysine 144 coordinates NADP(+). Asparagine 169 contacts substrate. The NADP(+) site is built by valine 170 and lysine 178. Lysine 178 acts as the Proton acceptor in catalysis. Residues serine 180, histidine 187, phenylalanine 201–serine 204, arginine 209, and tyrosine 272 contribute to the substrate site.

It belongs to the NAD(P)-dependent epimerase/dehydratase family. HldD subfamily. As to quaternary structure, homopentamer. It depends on NADP(+) as a cofactor.

The enzyme catalyses ADP-D-glycero-beta-D-manno-heptose = ADP-L-glycero-beta-D-manno-heptose. The protein operates within nucleotide-sugar biosynthesis; ADP-L-glycero-beta-D-manno-heptose biosynthesis; ADP-L-glycero-beta-D-manno-heptose from D-glycero-beta-D-manno-heptose 7-phosphate: step 4/4. Functionally, catalyzes the interconversion between ADP-D-glycero-beta-D-manno-heptose and ADP-L-glycero-beta-D-manno-heptose via an epimerization at carbon 6 of the heptose. This Salmonella arizonae (strain ATCC BAA-731 / CDC346-86 / RSK2980) protein is ADP-L-glycero-D-manno-heptose-6-epimerase.